The chain runs to 522 residues: DEAD-box ATP-dependent RNA helicase 1 (522 aa).

Residues 30-59 (CALDTLPCLNPKLKKALENMGISSLFPVQV) carry the Q motif motif. Residues 66 to 297 (IGPGGFERDI…QLDLHHPLFM (232 aa)) form the Helicase ATP-binding domain. An ATP-binding site is contributed by 79–86 (SPTGSGKT). The short motif at 207–210 (DETD) is the DEAD box element. The Helicase C-terminal domain maps to 325-475 (YLVALLKSWE…PIPPTSLDSI (151 aa)). The segment at 490–522 (VESEAPKKGRQAFRHNSRTGNSQTKLNKPRSEA) is disordered. Over residues 497–506 (KGRQAFRHNS) the composition is skewed to basic residues.

The protein belongs to the DEAD box helicase family. DDX51/DBP6 subfamily.

It catalyses the reaction ATP + H2O = ADP + phosphate + H(+). This Arabidopsis thaliana (Mouse-ear cress) protein is DEAD-box ATP-dependent RNA helicase 1 (RH1).